The sequence spans 463 residues: RuvB-like 2 (463 aa).

An N-acetylalanine modification is found at Ala2. Lys9 participates in a covalent cross-link: Glycyl lysine isopeptide (Lys-Gly) (interchain with G-Cter in SUMO2). ATP is bound at residue 77–84; it reads GQPGTGKT. Ser437 is modified (phosphoserine). Glycyl lysine isopeptide (Lys-Gly) (interchain with G-Cter in SUMO2) cross-links involve residues Lys444 and Lys456.

The protein belongs to the RuvB family. Forms homohexameric rings. Can form a dodecamer with RUVBL1 made of two stacked hexameric rings; however, even though RUVBL1 and RUVBL2 are present in equimolar ratio, the oligomeric status of each hexamer is not known. Oligomerization may regulate binding to nucleic acids and conversely, binding to nucleic acids may affect the dodecameric assembly. Interaction of the complex with DHX34 results in conformational changes of the N-terminus of the RUVBL2 subunits, resulting in loss of nucleotide binding ability and ATP hydrolysis of the complex. Interacts with the transcriptional activation domain of MYC. Interacts with ATF2. Component of the RNA polymerase II holoenzyme complex. May also act to bridge the LEF1/TCF1-CTNNB1 complex and TBP. Component of the NuA4 histone acetyltransferase complex which contains the catalytic subunit KAT5/TIP60 and the subunits EP400, TRRAP/PAF400, BRD8/SMAP, EPC1, DMAP1/DNMAP1, RUVBL1/TIP49, RUVBL2, ING3, actin, ACTL6A/BAF53A, MORF4L1/MRG15, MORF4L2/MRGX, MRGBP, YEATS4/GAS41, VPS72/YL1 and MEAF6. The NuA4 complex interacts with MYC and the adenovirus E1A protein. RUVBL2 interacts with EP400. Component of a NuA4-related complex which contains EP400, TRRAP/PAF400, SRCAP, BRD8/SMAP, EPC1, DMAP1/DNMAP1, RUVBL1/TIP49, RUVBL2, actin, ACTL6A/BAF53A, VPS72 and YEATS4/GAS41. Interacts with NPAT. Component of the chromatin-remodeling INO80 complex; specifically part of a complex module associated with the helicase ATP-binding and the helicase C-terminal domain of INO80. Component of some MLL1/MLL complex, at least composed of the core components KMT2A/MLL1, ASH2L, HCFC1/HCF1, WDR5 and RBBP5, as well as the facultative components BACC1, CHD8, E2F6, HSP70, INO80C, KANSL1, LAS1L, MAX, MCRS1, MGA, MYST1/MOF, PELP1, PHF20, PRP31, RING2, RUVB1/TIP49A, RUVB2/TIP49B, SENP3, TAF1, TAF4, TAF6, TAF7, TAF9 and TEX10. Interacts with IGHMBP2. Interacts with TELO2. Interacts with HINT1. Component of a SWR1-like complex. Component of the R2TP complex composed at least of RUVBL1, RUVBL2, RPAP3 and PIHD1. Component of the PAQosome complex which is responsible for the biogenesis of several protein complexes and which consists of R2TP complex members RUVBL1, RUVBL2, RPAP3 and PIH1D1, URI complex members PFDN2, PFDN6, PDRG1, UXT and URI1 as well as ASDURF, POLR2E and DNAAF10/WDR92. Interacts with ITFG1. Interacts with ZMYND10. Interacts with WAC; WAC positively regulates MTOR activity by promoting the assembly of the TTT complex composed of TELO2, TTI1 and TTI2 and the RUVBL complex composed of RUVBL1 and RUVBL2 into the TTT-RUVBL complex which leads to the dimerization of the mTORC1 complex and its subsequent activation. Forms a complex with APPL1 and APPL2. Interacts with ZNHIT2 (via HIT-type zinc finger) in the presence of ATP or ADP; shows a stronger interaction in the presence of ADP. The RUVBL1/RUVBL2 complex interacts with ZNHIT1 (via HIT-type zinc finger), ZNHIT3 (via HIT-type zinc finger), ZNHIT6 (via HIT-type zinc finger) and DDX59/ZNHIT5 (via HIT-type zinc finger) in the presence of ADP. Interacts with NOPCHAP1; the interaction is direct and disrupted upon ATP binding. Interacts with SMG1.

It is found in the nucleus matrix. The protein resides in the nucleus. Its subcellular location is the nucleoplasm. It localises to the cytoplasm. The protein localises to the membrane. It is found in the dynein axonemal particle. The enzyme catalyses ATP + H2O = ADP + phosphate + H(+). In terms of biological role, possesses single-stranded DNA-stimulated ATPase and ATP-dependent DNA helicase (5' to 3') activity; hexamerization is thought to be critical for ATP hydrolysis and adjacent subunits in the ring-like structure contribute to the ATPase activity. Component of the NuA4 histone acetyltransferase complex which is involved in transcriptional activation of select genes principally by acetylation of nucleosomal histones H4 and H2A. This modification may both alter nucleosome-DNA interactions and promote interaction of the modified histones with other proteins which positively regulate transcription. This complex may be required for the activation of transcriptional programs associated with oncogene and proto-oncogene mediated growth induction, tumor suppressor mediated growth arrest and replicative senescence, apoptosis, and DNA repair. The NuA4 complex ATPase and helicase activities seem to be, at least in part, contributed by the association of RUVBL1 and RUVBL2 with EP400. NuA4 may also play a direct role in DNA repair when recruited to sites of DNA damage. Component of a SWR1-like complex that specifically mediates the removal of histone H2A.Z/H2AZ1 from the nucleosome. Proposed core component of the chromatin remodeling INO80 complex which exhibits DNA- and nucleosome-activated ATPase activity and catalyzes ATP-dependent nucleosome sliding. Plays an essential role in oncogenic transformation by MYC and also modulates transcriptional activation by the LEF1/TCF1-CTNNB1 complex. May also inhibit the transcriptional activity of ATF2. Involved in the endoplasmic reticulum (ER)-associated degradation (ERAD) pathway where it negatively regulates expression of ER stress response genes. May play a role in regulating the composition of the U5 snRNP complex. This is RuvB-like 2 (RUVBL2) from Bos taurus (Bovine).